A 226-amino-acid chain; its full sequence is uncharacterized protein (226 aa).

The signal sequence occupies residues 1–18 (MRRIGLCISLLVTVLVMS).

This is an uncharacterized protein from Bacillus subtilis (strain 168).